The primary structure comprises 163 residues: Oocyte-secreted protein 1 (163 aa).

The N-terminal stretch at 1-21 (MKPSSGLRGLLVLFSLTWTCA) is a signal peptide.

This sequence belongs to the PLAC1 family. Oocyte-specific.

It is found in the secreted. Its function is as follows. May be involved in cell differentiation. The chain is Oocyte-secreted protein 1 (OOSP1) from Bos taurus (Bovine).